The following is a 184-amino-acid chain: Adenine phosphoribosyltransferase (184 aa).

This sequence belongs to the purine/pyrimidine phosphoribosyltransferase family. In terms of assembly, homodimer.

The protein resides in the cytoplasm. The catalysed reaction is AMP + diphosphate = 5-phospho-alpha-D-ribose 1-diphosphate + adenine. It functions in the pathway purine metabolism; AMP biosynthesis via salvage pathway; AMP from adenine: step 1/1. Catalyzes a salvage reaction resulting in the formation of AMP, that is energically less costly than de novo synthesis. The chain is Adenine phosphoribosyltransferase from Sphingopyxis alaskensis (strain DSM 13593 / LMG 18877 / RB2256) (Sphingomonas alaskensis).